A 141-amino-acid polypeptide reads, in one-letter code: General odorant-binding protein 57b (141 aa).

The first 22 residues, 1 to 22, serve as a signal peptide directing secretion; sequence MFIYRLVFIAPLILLLFSLAKA. 3 disulfides stabilise this stretch: Cys39/Cys77, Cys73/Cys120, and Cys111/Cys129.

It belongs to the PBP/GOBP family.

In terms of biological role, present in the aqueous fluid surrounding olfactory sensory dendrites and are thought to aid in the capture and transport of hydrophobic odorants into and through this fluid. In Drosophila melanogaster (Fruit fly), this protein is General odorant-binding protein 57b.